The sequence spans 344 residues: tRNA N6-adenosine threonylcarbamoyltransferase (344 aa).

Residues His-116 and His-120 each coordinate Fe cation. Residues 138–142 (LVSGG), Asp-171, Gly-184, Asp-188, and Asn-277 contribute to the substrate site. Asp-307 is a binding site for Fe cation.

Belongs to the KAE1 / TsaD family. Fe(2+) serves as cofactor.

The protein resides in the cytoplasm. The catalysed reaction is L-threonylcarbamoyladenylate + adenosine(37) in tRNA = N(6)-L-threonylcarbamoyladenosine(37) in tRNA + AMP + H(+). Functionally, required for the formation of a threonylcarbamoyl group on adenosine at position 37 (t(6)A37) in tRNAs that read codons beginning with adenine. Is involved in the transfer of the threonylcarbamoyl moiety of threonylcarbamoyl-AMP (TC-AMP) to the N6 group of A37, together with TsaE and TsaB. TsaD likely plays a direct catalytic role in this reaction. The protein is tRNA N6-adenosine threonylcarbamoyltransferase of Latilactobacillus sakei subsp. sakei (strain 23K) (Lactobacillus sakei subsp. sakei).